An 806-amino-acid polypeptide reads, in one-letter code: Polyribonucleotide nucleotidyltransferase (806 aa).

Mg(2+) is bound by residues D488 and D494. A KH domain is found at 555–614 (PQIRTVQIPTDKIRDLIGPGGKTIRGIIEATQVKIDVDDTGRVNIASSDEEGLKKALAMI). In terms of domain architecture, S1 motif spans 624–691 (GKTYLGKVVR…EGNRIKLSRK (68 aa)). A disordered region spans residues 698 to 806 (RQKLGLPEPG…QGGGGNRGPQ (109 aa)). Low complexity predominate over residues 704-717 (PEPGAEAPAAAEGQ). Positions 738 to 757 (GGEDFDDFDEEGGEGEGEDE) are enriched in acidic residues. Residues 758–774 (NFNREDTPNSAPGERRP) are compositionally biased toward basic and acidic residues. The span at 783–792 (RGRRRRRGRG) shows a compositional bias: basic residues. The span at 793–806 (RGPGQGGGGNRGPQ) shows a compositional bias: gly residues.

The protein belongs to the polyribonucleotide nucleotidyltransferase family. It depends on Mg(2+) as a cofactor.

The protein localises to the cytoplasm. The catalysed reaction is RNA(n+1) + phosphate = RNA(n) + a ribonucleoside 5'-diphosphate. Involved in mRNA degradation. Catalyzes the phosphorolysis of single-stranded polyribonucleotides processively in the 3'- to 5'-direction. This chain is Polyribonucleotide nucleotidyltransferase, found in Acidobacterium capsulatum (strain ATCC 51196 / DSM 11244 / BCRC 80197 / JCM 7670 / NBRC 15755 / NCIMB 13165 / 161).